The primary structure comprises 552 residues: Putative transport protein HS_1470 (552 aa).

The next 5 helical transmembrane spans lie at 4–24, 28–48, 67–87, 95–115, and 157–177; these read IAIT…IGHW, GVGL…HFMN, LILF…ASLL, GLAT…YKVV, and MAYA…MWLI. 2 consecutive RCK C-terminal domains span residues 190–275 and 277–360; these read KQFQ…VIGE and IDMP…IIGN. The next 6 helical transmembrane spans lie at 370 to 390, 402 to 424, 438 to 458, 463 to 483, 495 to 515, and 529 to 549; these read MLPV…PFYI, AGGP…LYWF, IVLF…DTLV, LEWM…TGII, LCGL…ANAI, and VYPL…ILLW.

This sequence belongs to the AAE transporter (TC 2.A.81) family. YidE subfamily.

The protein localises to the cell membrane. This chain is Putative transport protein HS_1470, found in Histophilus somni (strain 129Pt) (Haemophilus somnus).